The following is a 251-amino-acid chain: Gamma-glutamyl peptidase 5 (251 aa).

The Glutamine amidotransferase type-1 domain occupies 17 to 214; sequence STFVKKAYGG…IDRVVNLKLM (198 aa). C101 functions as the Nucleophile in the catalytic mechanism. Residues H193 and E195 contribute to the active site.

The protein belongs to the peptidase C26 family.

It localises to the cytoplasm. The protein localises to the cytosol. It functions in the pathway secondary metabolite biosynthesis. In terms of biological role, involved in glucosinolate biosynthesis. Hydrolyzes the gamma-glutamyl peptide bond of several glutathione (GSH) conjugates to produce Cys-Gly conjugates related to glucosinolates. The gamma-Glu-Cys-Gly-GSH conjugates are the sulfur-donating molecule in glucosinolate biosynthesis. This is Gamma-glutamyl peptidase 5 from Arabidopsis thaliana (Mouse-ear cress).